The primary structure comprises 225 residues: Rho GDP-dissociation inhibitor 3 (225 aa).

It belongs to the Rho GDI family.

The protein resides in the cytoplasm. Inhibits GDP/GTP exchange reaction of RhoB. Interacts specifically with the GDP- and GTP-bound forms of post-translationally processed Rhob and Rhog proteins, both of which show a growth-regulated expression in mammalian cells. Stimulates the release of the GDP-bound but not the GTP-bound RhoB protein. Also inhibits the GDP/GTP exchange of RhoB but shows less ability to inhibit the dissociation of prebound GTP. The polypeptide is Rho GDP-dissociation inhibitor 3 (ARHGDIG) (Bos taurus (Bovine)).